An 82-amino-acid polypeptide reads, in one-letter code: MNNPRGAFVQGAEAYGRFLEVFIDGHWWVVGDALENIGKTTKRLGANAYPHLYGGSSGLKGSSPKYSGYATPSKEVKSRFEK.

H26 is an a bacteriochlorophyll c binding site. Residues 55–82 (GSSGLKGSSPKYSGYATPSKEVKSRFEK) form a disordered region. Over residues 59–69 (LKGSSPKYSGY) the composition is skewed to low complexity.

This sequence belongs to the BChl C/E-binding protein family.

It localises to the chlorosome. The protein localises to the chlorosome envelope. Component of the photosynthetic apparatus. The light harvesting B740 complex binds bacteriochlorophyll c. This is Chlorosome protein E (csmE) from Chlorobaculum tepidum (strain ATCC 49652 / DSM 12025 / NBRC 103806 / TLS) (Chlorobium tepidum).